A 792-amino-acid chain; its full sequence is Endonuclease MutS2 (792 aa).

344–351 is an ATP binding site; that stretch reads GPNTGGKT. Positions 716–791 constitute a Smr domain; the sequence is IHLRGLHVEE…GLGVTVVYLE (76 aa).

The protein belongs to the DNA mismatch repair MutS family. MutS2 subfamily. In terms of assembly, homodimer. Binds to stalled ribosomes, contacting rRNA.

Endonuclease that is involved in the suppression of homologous recombination and thus may have a key role in the control of bacterial genetic diversity. Functionally, acts as a ribosome collision sensor, splitting the ribosome into its 2 subunits. Detects stalled/collided 70S ribosomes which it binds and splits by an ATP-hydrolysis driven conformational change. Acts upstream of the ribosome quality control system (RQC), a ribosome-associated complex that mediates the extraction of incompletely synthesized nascent chains from stalled ribosomes and their subsequent degradation. Probably generates substrates for RQC. The sequence is that of Endonuclease MutS2 from Thermomicrobium roseum (strain ATCC 27502 / DSM 5159 / P-2).